The chain runs to 206 residues: Large ribosomal subunit protein uL4 (206 aa).

Residues 47–75 are disordered; sequence GTQSAKTRAEVSGGGIKPWRQKGTGRARQ.

Belongs to the universal ribosomal protein uL4 family. In terms of assembly, part of the 50S ribosomal subunit.

In terms of biological role, one of the primary rRNA binding proteins, this protein initially binds near the 5'-end of the 23S rRNA. It is important during the early stages of 50S assembly. It makes multiple contacts with different domains of the 23S rRNA in the assembled 50S subunit and ribosome. Forms part of the polypeptide exit tunnel. The chain is Large ribosomal subunit protein uL4 from Clostridium botulinum (strain ATCC 19397 / Type A).